A 350-amino-acid polypeptide reads, in one-letter code: tRNA uridine(34) hydroxylase (350 aa).

In terms of domain architecture, Rhodanese spans 146–240; that stretch reads DDPDALFIDM…YARKAREQGL (95 aa). The active-site Cysteine persulfide intermediate is the cysteine 200.

It belongs to the TrhO family.

It catalyses the reaction uridine(34) in tRNA + AH2 + O2 = 5-hydroxyuridine(34) in tRNA + A + H2O. In terms of biological role, catalyzes oxygen-dependent 5-hydroxyuridine (ho5U) modification at position 34 in tRNAs, the first step in 5-carboxymethoxyuridine (cmo5U) biosynthesis. May be part of an alternate pathway, which is able to bypass cmo5U biogenesis in a subset of tRNAs under aerobic conditions. This is tRNA uridine(34) hydroxylase from Escherichia coli (strain SE11).